Consider the following 56-residue polypeptide: Conotoxin Cal6.41b (56 aa).

The signal sequence occupies residues Met1–Thr23. Cystine bridges form between Cys27-Cys41, Cys33-Cys50, and Cys40-Cys54.

Expressed by the venom duct.

It localises to the secreted. Probable neurotoxin. The sequence is that of Conotoxin Cal6.41b from Californiconus californicus (California cone).